The chain runs to 144 residues: Large ribosomal subunit protein uL15 (144 aa).

Positions 1-54 (MRLNTLSPAAGSKHAPKRVGRGMGSGLGKTAGRGHKGQKSRSGGGVRPGFEGGQ) are disordered. Gly residues-rich tracts occupy residues 21–31 (RGMGSGLGKTA) and 42–52 (SGGGVRPGFEG).

This sequence belongs to the universal ribosomal protein uL15 family. As to quaternary structure, part of the 50S ribosomal subunit.

Its function is as follows. Binds to the 23S rRNA. This chain is Large ribosomal subunit protein uL15, found in Shewanella baltica (strain OS223).